A 1940-amino-acid chain; its full sequence is Myosin-3 (1940 aa).

The Myosin N-terminal SH3-like domain maps to 33–82 (DAKTYCFVVDSKEEYVKGKIKSSQDGKVTVETEDSRTLVVKPEDVYAMNP). Residues 86-779 (DKIEDMAMLT…LLGTLEEMRD (694 aa)) form the Myosin motor domain. At lysine 130 the chain carries N6,N6,N6-trimethyllysine. Residue 179–186 (GESGAGKT) participates in ATP binding. 2 actin-binding regions span residues 656–678 (LNKL…IPNE) and 758–772 (KFGH…GLLG). Residues 782–811 (LAKLITRTQAVCRGFLMRVEFQKMMQRRES) form the IQ domain. Positions 841 to 1928 (LKSAETEKEM…NKLRAKTRDF (1088 aa)) form a coiled coil. Residues 1260–1289 (ARGKNEEMQRSLSELTTQKSRLQTEAGELS) form a disordered region. Positions 1269-1282 (RSLSELTTQKSRLQ) are enriched in polar residues.

It belongs to the TRAFAC class myosin-kinesin ATPase superfamily. Myosin family. Muscle myosin is a hexameric protein that consists of 2 heavy chain subunits (MHC), 2 alkali light chain subunits (MLC) and 2 regulatory light chain subunits (MLC-2).

The protein localises to the cytoplasm. Its subcellular location is the myofibril. In terms of biological role, muscle contraction. The chain is Myosin-3 (Myh3) from Mus musculus (Mouse).